A 192-amino-acid chain; its full sequence is Peptidyl-tRNA hydrolase (192 aa).

H17 provides a ligand contact to tRNA. The active-site Proton acceptor is the H22. TRNA contacts are provided by F68, N70, and N116.

This sequence belongs to the PTH family. As to quaternary structure, monomer.

Its subcellular location is the cytoplasm. It catalyses the reaction an N-acyl-L-alpha-aminoacyl-tRNA + H2O = an N-acyl-L-amino acid + a tRNA + H(+). In terms of biological role, hydrolyzes ribosome-free peptidyl-tRNAs (with 1 or more amino acids incorporated), which drop off the ribosome during protein synthesis, or as a result of ribosome stalling. Catalyzes the release of premature peptidyl moieties from peptidyl-tRNA molecules trapped in stalled 50S ribosomal subunits, and thus maintains levels of free tRNAs and 50S ribosomes. The sequence is that of Peptidyl-tRNA hydrolase from Stenotrophomonas maltophilia (strain R551-3).